Here is a 4074-residue protein sequence, read N- to C-terminus: Fibrocystin (4074 aa).

Residues 1–22 (MIVWLISLMSIEILLLAGPALS) form the signal peptide. 2 N-linked (GlcNAc...) asparagine glycosylation sites follow: asparagine 54 and asparagine 224. An IPT/TIG 1 domain is found at 258 to 310 (EILSVFPETGSLGGKTDIIITGDFFDNPALVTIAGVPCDIRHMSPRKIECTTR). Residues 323 to 483 (AGNRGLLFEV…TWLNPDVVST (161 aa)) enclose the PA14 domain. 46 N-linked (GlcNAc...) asparagine glycosylation sites follow: asparagine 355, asparagine 385, asparagine 518, asparagine 527, asparagine 640, asparagine 710, asparagine 741, asparagine 822, asparagine 829, asparagine 868, asparagine 953, asparagine 966, asparagine 976, asparagine 1006, asparagine 1059, asparagine 1083, asparagine 1115, asparagine 1134, asparagine 1233, asparagine 1240, asparagine 1274, asparagine 1284, asparagine 1308, asparagine 1319, asparagine 1342, asparagine 1373, asparagine 1445, asparagine 1456, asparagine 1471, asparagine 1490, asparagine 1528, asparagine 1560, asparagine 1578, asparagine 1598, asparagine 1627, asparagine 1694, asparagine 1760, asparagine 1775, asparagine 1789, asparagine 1875, asparagine 1915, asparagine 1941, asparagine 1955, asparagine 2030, asparagine 2111, and asparagine 2140. An IPT/TIG 2 domain is found at 944-1000 (SLLIYIFGINFSGDPQALEIMVNKTNCKVIFSNQTNVICQTDLLPVGMHRLFMVVRP). IPT/TIG domains lie at 1018–1101 (PRLD…AFTY), 1107–1186 (PVIT…RSPG), and 1199–1274 (SIEP…WAGN). The region spanning 1385 to 1464 (PWIMAISPTH…LNVTVIVNGL (80 aa)) is the IPT/TIG 6 domain. Positions 1573-1641 (HYFPKNFSIH…LVIEVDGLSY (69 aa)) constitute an IPT/TIG 7 domain. Positions 1928–2049 (HSWFPERVPQ…PEVTFTHLQA (122 aa)) constitute a G8 1 domain. PbH1 repeat units follow at residues 2245 to 2267 (TLGLKVDSNIFYNILGHALLVGT), 2288 to 2322 (EQGNIIRNNVIISISGTEGLSSPEMLTPSGIYILN), 2351 to 2373 (APLLSFTQNIAHSCTRYGLFIYP), 2383 to 2404 (RGPTLFQNFTVWGSAGGARISR), and 2405 to 2427 (SSNLHLKNFQVYSCRDFGIDILE). Asparagine 2390 carries N-linked (GlcNAc...) asparagine glycosylation. Residues asparagine 2431, asparagine 2467, asparagine 2531, asparagine 2549, asparagine 2579, asparagine 2591, asparagine 2749, asparagine 2764, asparagine 2972, and asparagine 3004 are each glycosylated (N-linked (GlcNAc...) asparagine). The stretch at 2460–2483 (RWELIISNTTFVNFDLTDCVSIRT) is one PbH1 6 repeat. The G8 2 domain maps to 2743–2869 (EGWGGHNHTI…PKKSWTRLAA (127 aa)). Residues 3029–3051 (SHGIILNDNIVFGTVGHGIDLEG) form a PbH1 7 repeat. Asparagine 3053 carries N-linked (GlcNAc...) asparagine glycosylation. The stretch at 3082–3104 (AKDINLYGNVVAGSERIGFHIQG) is one PbH1 8 repeat. N-linked (GlcNAc...) asparagine glycans are attached at residues asparagine 3136, asparagine 3165, asparagine 3221, asparagine 3484, asparagine 3702, asparagine 3721, and asparagine 3833. Residues 3158-3183 (ENSVEIENITLVDNSIGLLATVYVSS) form a PbH1 9 repeat. The helical transmembrane segment at 3854 to 3874 (IILAVSLCSVASWLALCCLVC) threads the bilayer. The segment at 3871–3888 (CLVCCWFRKSKSRKIKSE) is ciliary targeting sequence (CST). 3 disordered regions span residues 3896-3919 (NDQKSHIHMSSKHPRSQETKKEDT), 3943-3965 (NGVSRRKVSRRAVREEGSSREED), and 4031-4074 (LQGQ…QEQL). Basic and acidic residues-rich tracts occupy residues 3910-3919 (RSQETKKEDT) and 3954-3965 (AVREEGSSREED). A nuclear localization signal (NLS) region spans residues 3947 to 3976 (RRKVSRRAVREEGSSREEDVVPAPRIISIT).

Interacts with CAMLG. Interacts with PKD2. Interacts (via CST) with ARF4; this interaction allows an efficient PKHD1 trafficking to the cilium. Interacts (via CST) with RAB8A; this interaction controls trafficking through the endomembrane systeme and to the cilium. Interacts (via CST) with TULP3; this interaction allows PKHD1 trafficking to the cilium. Palmitoylated. Palmitoylation facilitates the trafficking to the cilia and membrane targeting. Post-translationally, N-glycosylated. In terms of processing, several proteolytic cleavages occur within the extracellular domain, whereas at least one cleavage occurs within the cytoplasmic domain. Cleaved by a probable proprotein convertase which produces an extracellular domain (polyductin extracellular domain, (PECD)) and a C-terminal fragment (polyductin transmembrane fragment (PTM)) which are tethered together by disulfide bonds. This extracellular domain (PECD) is then shed from the primary cilium by activation of a member of the ADAM metalloproteinase disintegrins family, resulting in concomitant release of an intra-cellular C-terminal fragment (ICD) via a gamma-secretase-dependent process. The proteolytic cleavage of the C-terminal intracellular fragment (ICD) is controlled by cytosolic calcium concentration and activation of PKC.

The protein localises to the cell membrane. Its subcellular location is the cytoplasm. It localises to the apical cell membrane. The protein resides in the cytoskeleton. It is found in the cilium basal body. The protein localises to the cell projection. Its subcellular location is the cilium. It localises to the spindle. The protein resides in the chromosome. It is found in the centromere. The protein localises to the nucleus. Its subcellular location is the secreted. It localises to the extracellular exosome. The protein resides in the endoplasmic reticulum. It is found in the golgi apparatus. Promotes ciliogenesis in renal epithelial cells and therefore participates in the tubules formation and/ or ensures the maintenance of the architecture of the lumen of the kidney. Has an impact on cellular symmetry by ensuring correct bipolar cell division through the regulation of centrosome duplication and mitotic spindle assembly and by maintaining oriented cell division (OCD) during tubular elongation through planar cell polarity (PCP) pathway. During epithelial cell morphogenesis, it also regulates cell-cell and cell-matrix adhesion and participates in cell motility. Promotes cell-cell contact through the positive regulation of PTK2 kinase activity leading to either positive regulation of epithelial cell proliferation through the HRAS/RAF1 pathways, or negative regulation of apoptosis through the PDK1/AKT1 pathway. May act in collecting-duct and biliary differentiation. May participate in the regulation of the cholangiocytes proliferation and the CCN2 production in an CXCL8-dependent manner. The chain is Fibrocystin from Canis lupus familiaris (Dog).